The chain runs to 78 residues: Acyl carrier protein (78 aa).

Residues 2–77 (STIEERVKKI…AAIDYIEAAN (76 aa)) enclose the Carrier domain. Position 37 is an O-(pantetheine 4'-phosphoryl)serine (serine 37).

This sequence belongs to the acyl carrier protein (ACP) family. Post-translationally, 4'-phosphopantetheine is transferred from CoA to a specific serine of apo-ACP by AcpS. This modification is essential for activity because fatty acids are bound in thioester linkage to the sulfhydryl of the prosthetic group.

The protein resides in the cytoplasm. It functions in the pathway lipid metabolism; fatty acid biosynthesis. Carrier of the growing fatty acid chain in fatty acid biosynthesis. This chain is Acyl carrier protein, found in Edwardsiella ictaluri (strain 93-146).